The primary structure comprises 446 residues: Xanthone prenyltransferase A (446 aa).

R113, K199, Y201, R263, K265, Y267, Y369, and Y440 together coordinate dimethylallyl diphosphate.

This sequence belongs to the tryptophan dimethylallyltransferase family.

The protein operates within secondary metabolite biosynthesis. Xanthone prenyltransferase involved in the conversion of monodictyphenone to the prenyl xanthones such as emericellin, shamixanthone and epishamixanthone. Monodictyphenone is first converted to variecoxanthone A via a paeciloxanthone intermediate by the consecutive actions of the FAD-dependent monooxygenase mdpD and the xanthone prenyltransferase xptB. XptB catalyzes regular O-prenylation at the hydroxy group of C-7 of the xanthone ring. Variecoxanthone A is further prenylated to emericellin by xptA before being reduced to shamixanthone and epishamixanthone by the dehydrogenase xptC. This is Xanthone prenyltransferase A from Emericella nidulans (strain FGSC A4 / ATCC 38163 / CBS 112.46 / NRRL 194 / M139) (Aspergillus nidulans).